A 279-amino-acid polypeptide reads, in one-letter code: NAD kinase (279 aa).

The active-site Proton acceptor is Asp-57. Residues Asp-57–Gly-58, Asn-133–Glu-134, Arg-159, Asp-161, and Thr-172–Ser-177 contribute to the NAD(+) site.

Belongs to the NAD kinase family. Requires a divalent metal cation as cofactor.

It localises to the cytoplasm. It carries out the reaction NAD(+) + ATP = ADP + NADP(+) + H(+). Involved in the regulation of the intracellular balance of NAD and NADP, and is a key enzyme in the biosynthesis of NADP. Catalyzes specifically the phosphorylation on 2'-hydroxyl of the adenosine moiety of NAD to yield NADP. The polypeptide is NAD kinase (Streptococcus pyogenes serotype M12 (strain MGAS2096)).